The primary structure comprises 136 residues: Histone H3.3C (136 aa).

The segment covering 1 to 10 (MARTKQTACK) has biased composition (polar residues). The segment at 1 to 39 (MARTKQTACKSTGRKAPRKQLATKAAHKSAPAMGGVKKP) is disordered. Position 3 is an asymmetric dimethylarginine; by PRMT6 (R3). T4 carries the post-translational modification Phosphothreonine; by HASPIN. The residue at position 5 (K5) is an Allysine; alternate. At K5 the chain carries N6,N6,N6-trimethyllysine; alternate. K5 carries the N6,N6-dimethyllysine; alternate modification. The residue at position 5 (K5) is an N6-(2-hydroxyisobutyryl)lysine; alternate. K5 carries the post-translational modification N6-acetyllysine; alternate. K5 is modified (N6-methyllysine; alternate). Q6 is subject to 5-glutamyl dopamine; alternate. Q6 is subject to 5-glutamyl serotonin; alternate. T7 bears the Phosphothreonine; by PKC mark. K10 is subject to N6-(2-hydroxyisobutyryl)lysine; alternate. Position 10 is an N6-lactoyllysine; alternate (K10). The residue at position 10 (K10) is an N6-methylated lysine. S11 carries the post-translational modification ADP-ribosylserine; alternate. S11 is modified (phosphoserine; alternate; by AURKB, AURKC, RPS6KA3, RPS6KA4 and RPS6KA5). T12 is modified (phosphothreonine; by PKC). K15 is subject to N6-(2-hydroxyisobutyryl)lysine; alternate. At K15 the chain carries N6-lactoyllysine; alternate. K15 is subject to N6-acetyllysine. At K15 the chain carries N6-glutaryllysine; alternate. Asymmetric dimethylarginine is present on R18. N6-(2-hydroxyisobutyryl)lysine; alternate occurs at positions 19, 24, and 28. K19 carries the N6-acetyllysine; alternate modification. An N6-lactoyllysine; alternate mark is found at K19, K24, and K28. 3 positions are modified to N6-glutaryllysine; alternate: K19, K24, and K28. N6-butyryllysine; alternate is present on residues K19 and K24. K19 carries the post-translational modification N6-methylated lysine; alternate. K24 bears the N6-acetyllysine mark. K28 bears the N6-acetyllysine; alternate mark. At K28 the chain carries N6-methylated lysine; alternate. S29 carries the post-translational modification ADP-ribosylserine; alternate. Residue S29 is modified to Phosphoserine; alternate; by AURKB, AURKC and RPS6KA5. An N6-(2-hydroxyisobutyryl)lysine; alternate modification is found at K37. At K37 the chain carries N6-acetyllysine; alternate. K37 carries the post-translational modification N6-methylated lysine; alternate. The residue at position 42 (Y42) is a Phosphotyrosine. Residue K57 is modified to N6-(2-hydroxyisobutyryl)lysine; alternate. At K57 the chain carries N6-lactoyllysine; alternate. Residue K57 is modified to N6-glutaryllysine; alternate. Residue K57 is modified to N6-succinyllysine; alternate. S58 bears the Phosphoserine mark. N6-(2-hydroxyisobutyryl)lysine; alternate is present on residues K65 and K80. Residues K65 and K80 each carry the N6-methylated lysine modification. K80 carries the post-translational modification N6-lactoyllysine; alternate. Position 80 is an N6-glutaryllysine; alternate (K80). The residue at position 80 (K80) is an N6-succinyllysine; alternate. Phosphothreonine is present on T81. K116 and K123 each carry N6-acetyllysine; alternate. N6-glutaryllysine; alternate occurs at positions 116 and 123. K123 is subject to N6-(2-hydroxyisobutyryl)lysine; alternate. K123 bears the N6-methylated lysine; alternate mark. At K123 the chain carries N6-succinyllysine; alternate.

It belongs to the histone H3 family. As to quaternary structure, the nucleosome is a histone octamer containing two molecules each of H2A, H2B, H3 and H4 assembled in one H3-H4 heterotetramer and two H2A-H2B heterodimers. The octamer wraps approximately 147 bp of DNA. Acetylation is generally linked to gene activation. Acetylation on Lys-19 (H3K18ac) and Lys-24 (H3K24ac) favors methylation at Arg-18 (H3R17me). Acetylation at Lys-123 (H3K122ac) by EP300/p300 plays a central role in chromatin structure: localizes at the surface of the histone octamer and stimulates transcription, possibly by promoting nucleosome instability. Post-translationally, asymmetric dimethylation at Arg-18 (H3R17me2a) is linked to gene activation. Asymmetric dimethylation at Arg-3 (H3R2me2a) by PRMT6 is linked to gene repression and is mutually exclusive with H3 Lys-5 methylation (H3K4me2 and H3K4me3). H3R2me2a is present at the 3' of genes regardless of their transcription state and is enriched on inactive promoters, while it is absent on active promoters. In terms of processing, methylation at Lys-5 (H3K4me) and Lys-80 (H3K79me) are linked to gene activation. Methylation at Lys-5 (H3K4me) facilitates subsequent acetylation of H3 and H4. Methylation at Lys-80 (H3K79me) is associated with DNA double-strand break (DSB) responses and is a specific target for TP53BP1. Methylation at Lys-10 (H3K9me) and Lys-28 (H3K27me) are linked to gene repression. Methylation at Lys-10 (H3K9me) is a specific target for HP1 proteins (CBX1, CBX3 and CBX5) and prevents subsequent phosphorylation at Ser-11 (H3S10ph) and acetylation of H3 and H4. Methylation at Lys-5 (H3K4me) and Lys-80 (H3K79me) require preliminary monoubiquitination of H2B at 'Lys-120'. Phosphorylated at Thr-4 (H3T3ph) by HASPIN during prophase and dephosphorylated during anaphase. Phosphorylation at Ser-11 (H3S10ph) by AURKB is crucial for chromosome condensation and cell-cycle progression during mitosis and meiosis. In addition phosphorylation at Ser-11 (H3S10ph) by RPS6KA4 and RPS6KA5 is important during interphase because it enables the transcription of genes following external stimulation, like mitogens, stress, growth factors or UV irradiation and result in the activation of genes, such as c-fos and c-jun. Phosphorylation at Ser-11 (H3S10ph), which is linked to gene activation, prevents methylation at Lys-10 (H3K9me) but facilitates acetylation of H3 and H4. Phosphorylation at Ser-11 (H3S10ph) by AURKB mediates the dissociation of HP1 proteins (CBX1, CBX3 and CBX5) from heterochromatin. Phosphorylation at Ser-11 (H3S10ph) is also an essential regulatory mechanism for neoplastic cell transformation. Phosphorylated at Ser-29 (H3S28ph) by MAP3K20 isoform 1, RPS6KA5 or AURKB during mitosis or upon ultraviolet B irradiation. Phosphorylation at Thr-7 (H3T6ph) by PRKCB is a specific tag for epigenetic transcriptional activation that prevents demethylation of Lys-5 (H3K4me) by LSD1/KDM1A. At centromeres, specifically phosphorylated at Thr-12 (H3T11ph) from prophase to early anaphase, by DAPK3 and PKN1. Phosphorylation at Thr-12 (H3T11ph) by PKN1 or isoform M2 of PKM (PKM2) is a specific tag for epigenetic transcriptional activation that promotes demethylation of Lys-10 (H3K9me) by KDM4C/JMJD2C. Phosphorylation at Tyr-42 (H3Y41ph) by JAK2 promotes exclusion of CBX5 (HP1 alpha) from chromatin. Post-translationally, lysine deamination at Lys-5 (H3K4all) to form allysine only takes place on H3K4me3 and results in gene repression. In terms of processing, butyrylation of histones marks active promoters and competes with histone acetylation. It is present during late spermatogenesis. Succinylation at Lys-80 (H3K79succ) by KAT2A takes place with a maximum frequency around the transcription start sites of genes. It gives a specific tag for epigenetic transcription activation. Desuccinylation at Lys-123 (H3K122succ) by SIRT7 in response to DNA damage promotes chromatin condensation and double-strand breaks (DSBs) repair. Post-translationally, serine ADP-ribosylation constitutes the primary form of ADP-ribosylation of proteins in response to DNA damage. Serine ADP-ribosylation at Ser-11 (H3S10ADPr) is mutually exclusive with phosphorylation at Ser-11 (H3S10ph) and impairs acetylation at Lys-10 (H3K9ac).

Its subcellular location is the nucleus. The protein resides in the chromosome. In terms of biological role, core component of nucleosome. Nucleosomes wrap and compact DNA into chromatin, limiting DNA accessibility to the cellular machineries which require DNA as a template. Histones thereby play a central role in transcription regulation, DNA repair, DNA replication and chromosomal stability. DNA accessibility is regulated via a complex set of post-translational modifications of histones, also called histone code, and nucleosome remodeling. In Cairina moschata (Muscovy duck), this protein is Histone H3.3C.